Reading from the N-terminus, the 429-residue chain is Glucose-1-phosphate adenylyltransferase (429 aa).

Residues Gly162, 177–178 (EK), and Ser209 each bind alpha-D-glucose 1-phosphate.

The protein belongs to the bacterial/plant glucose-1-phosphate adenylyltransferase family. In terms of assembly, homotetramer.

It carries out the reaction alpha-D-glucose 1-phosphate + ATP + H(+) = ADP-alpha-D-glucose + diphosphate. It functions in the pathway glycan biosynthesis; glycogen biosynthesis. Functionally, involved in the biosynthesis of ADP-glucose, a building block required for the elongation reactions to produce glycogen. Catalyzes the reaction between ATP and alpha-D-glucose 1-phosphate (G1P) to produce pyrophosphate and ADP-Glc. The sequence is that of Glucose-1-phosphate adenylyltransferase from Rippkaea orientalis (strain PCC 8801 / RF-1) (Cyanothece sp. (strain PCC 8801)).